Consider the following 161-residue polypeptide: Peripheral myelin protein 22 (161 aa).

Residue Met1 is a topological domain, cytoplasmic. The helical transmembrane segment at 2-31 (LLLLLGILFLHIAVLVLLFVSTIVSQWLVG) threads the bilayer. The Extracellular portion of the chain corresponds to 32-64 (NGHTTDLWQNCTTSALGAVQHCYSSSVSEWLQS). An N-linked (GlcNAc...) asparagine glycan is attached at Asn41. A helical transmembrane segment spans residues 65 to 91 (VQATMILSVIFSVLALFLFFCQLFTLT). The Cytoplasmic portion of the chain corresponds to 92-95 (KGGR). Residues 96-119 (FYITGFFQILAGLCVMSAAAIYTV) form a helical membrane-spanning segment. At 120–133 (RHSEWHVNTDYSYG) the chain is on the extracellular side. The helical transmembrane segment at 134-156 (FAYILAWVAFPLALLSGIIYVIL) threads the bilayer. Over 157–160 (RKRE) the chain is Cytoplasmic.

It belongs to the PMP-22/EMP/MP20 family. Post-translationally, ubiquitinated by the DCX(DCAF13) E3 ubiquitin ligase complex, leading to its degradation. As to expression, schwann cells of the peripheral nervous system. Expressed at growth arrest of mammalian fibroblasts.

Its subcellular location is the cell membrane. In terms of biological role, might be involved in growth regulation, and in myelinization in the peripheral nervous system. The sequence is that of Peripheral myelin protein 22 (Pmp22) from Mus musculus (Mouse).